The primary structure comprises 840 residues: MNEHRREPHRRSGYQDDSAFTNTEKLVDELDHNVEPEQLLEKNRTDFKLMYVIVKFYRWFNNLSFITRWITIWFPLAGALVIPLAVGVSPYPNAKLGGVRIFWIFVWLEVAWGGFWVSRVIARLLPYILYPLMGILPFTMYKYTVILTALEMPLAIFFCSIVCVCTFSPIMIGKGNFTSTTVTTTTSATATPTASASSNAVESVFVTKTAASVPSWIKVITKILGAAVVTSIVLLLEKIFLHFIGFHYHEVQYQYRITDNKRNTAVLAKLLTAALDAPYHDSPRVRRQDYLLGLIDTRSMSESKGSGNGKLRKVKKISKNAKRIFSKTRNAISTAFTDMLGKHAKDLTPEQEFILETIRSKKKCLALARKIWYSLVPEGEDCFQKEDLIGLIPDDEINDIFHILDNDYSRTVTLDEMEQFTREISIEFRSISSSLRDVDLALGKLDRVGLGVVGIIAVLTFISFLDTSFATILAAFGTTLLSLSFVFSTSAQELMSSIIFLFSKHPFDISDVVIVNNIKYEVVSLSLLFTVFRTMGGSTVQAPNSLLNTLFIENLRRSQPQSETITIVSPFATDFKQLERLRDLLLTFVKENERDFRPIIDLNVSDFSTLDSLKFTVTYYYKSNWQNVSLQCVRRNKFMCALKNAIATTNLPAVADPVRGSPDYPFVIEQYNLERPEYSKTASRPQFSDISSTASSNSLSNKPGFAHSESRNYHTHDEDNSSDDNHKREDRGHLPAQYLRQSVATWQIPNLISAIEAYDSQNESSQENATYTVVESNGNANGDNTATNSQGATDNGQTTTNTTQNNVDNTQATTDNTQANTDNMQVAIDYSQNMDGQIQY.

Topologically, residues 1–68 are cytoplasmic; the sequence is MNEHRREPHR…WFNNLSFITR (68 aa). A helical transmembrane segment spans residues 69–89; that stretch reads WITIWFPLAGALVIPLAVGVS. Over 90–100 the chain is Lumenal; that stretch reads PYPNAKLGGVR. A helical membrane pass occupies residues 101 to 121; it reads IFWIFVWLEVAWGGFWVSRVI. The Cytoplasmic segment spans residues 122-126; it reads ARLLP. The helical transmembrane segment at 127-147 threads the bilayer; that stretch reads YILYPLMGILPFTMYKYTVIL. Residues 148-151 lie on the Lumenal side of the membrane; it reads TALE. A helical membrane pass occupies residues 152–172; it reads MPLAIFFCSIVCVCTFSPIMI. The Cytoplasmic segment spans residues 173-225; it reads GKGNFTSTTVTTTTSATATPTASASSNAVESVFVTKTAASVPSWIKVITKILG. A helical transmembrane segment spans residues 226 to 246; sequence AAVVTSIVLLLEKIFLHFIGF. Residues 247–449 lie on the Lumenal side of the membrane; the sequence is HYHEVQYQYR…LALGKLDRVG (203 aa). The region spanning 392 to 427 is the EF-hand domain; sequence IPDDEINDIFHILDNDYSRTVTLDEMEQFTREISIE. Residues 450 to 491 form a helical membrane-spanning segment; it reads LGVVGIIAVLTFISFLDTSFATILAAFGTTLLSLSFVFSTSA. Over 492–840 the chain is Cytoplasmic; that stretch reads QELMSSIIFL…SQNMDGQIQY (349 aa). 2 disordered regions span residues 677-730 and 775-819; these read EYSK…KRED and ESNG…NTQA. Residues 688–700 are compositionally biased toward low complexity; that stretch reads SDISSTASSNSLS. The segment covering 708-730 has biased composition (basic and acidic residues); the sequence is SESRNYHTHDEDNSSDDNHKRED. A compositionally biased stretch (low complexity) spans 776 to 819; the sequence is SNGNANGDNTATNSQGATDNGQTTTNTTQNNVDNTQATTDNTQA.

It belongs to the MscS (TC 1.A.23) family.

The protein localises to the endoplasmic reticulum membrane. Functionally, regulates intracellular calcium levels and cell volume for survival in response to hypo-osmotic shock. Involved in maintaining vacuole integrity and protecting the nuclear envelope upon hypo-osmotic shock. The polypeptide is Mechanosensitive ion channel protein Msy2 (Schizosaccharomyces pombe (strain 972 / ATCC 24843) (Fission yeast)).